Here is a 152-residue protein sequence, read N- to C-terminus: SsrA-binding protein (152 aa).

It belongs to the SmpB family.

Its subcellular location is the cytoplasm. Functionally, required for rescue of stalled ribosomes mediated by trans-translation. Binds to transfer-messenger RNA (tmRNA), required for stable association of tmRNA with ribosomes. tmRNA and SmpB together mimic tRNA shape, replacing the anticodon stem-loop with SmpB. tmRNA is encoded by the ssrA gene; the 2 termini fold to resemble tRNA(Ala) and it encodes a 'tag peptide', a short internal open reading frame. During trans-translation Ala-aminoacylated tmRNA acts like a tRNA, entering the A-site of stalled ribosomes, displacing the stalled mRNA. The ribosome then switches to translate the ORF on the tmRNA; the nascent peptide is terminated with the 'tag peptide' encoded by the tmRNA and targeted for degradation. The ribosome is freed to recommence translation, which seems to be the essential function of trans-translation. The sequence is that of SsrA-binding protein from Sulfurihydrogenibium sp. (strain YO3AOP1).